The following is a 383-amino-acid chain: Putative glutamate--cysteine ligase 2 (383 aa).

The protein belongs to the glutamate--cysteine ligase type 2 family. YbdK subfamily.

The enzyme catalyses L-cysteine + L-glutamate + ATP = gamma-L-glutamyl-L-cysteine + ADP + phosphate + H(+). Functionally, ATP-dependent carboxylate-amine ligase which exhibits weak glutamate--cysteine ligase activity. This chain is Putative glutamate--cysteine ligase 2, found in Legionella pneumophila subsp. pneumophila (strain Philadelphia 1 / ATCC 33152 / DSM 7513).